We begin with the raw amino-acid sequence, 1115 residues long: Serine/threonine-protein kinase/endoribonuclease IRE1 (1115 aa).

An N-terminal signal peptide occupies residues 1–18; it reads MRLLRRNMLVLTLLVCVF. Topologically, residues 19–526 are lumenal; the sequence is SSIISCSIPL…RELDEKNQNS (508 aa). N-linked (GlcNAc...) asparagine glycans are attached at residues asparagine 111, asparagine 213, asparagine 298, and asparagine 397. Residues 527–555 form a helical membrane-spanning segment; that stretch reads LLLKFGSLVYRIIETGVFLLLFLIFCAIL. Residues 556 to 1115 are Cytoplasmic-facing; that stretch reads QRFKILPPLY…DQILREFLYS (560 aa). The tract at residues 617–658 is disordered; the sequence is GSLKSEKDNDDADEDDEKSLDLTTEKKKRKRGSRGGKKGRKS. Residues 624 to 634 are compositionally biased toward acidic residues; it reads DNDDADEDDEK. Basic residues predominate over residues 642-658; it reads KKKRKRGSRGGKKGRKS. Residues 674 to 980 form the Protein kinase domain; it reads VVSEKILGYG…AMKVLRHPLF (307 aa). The ADP site is built by serine 684, lysine 702, glutamate 746, cysteine 748, and asparagine 751. Aspartate 797 (proton acceptor) is an active-site residue. The Mg(2+) site is built by asparagine 802 and aspartate 828. Residues serine 840 and serine 841 each carry the phosphoserine; by autocatalysis modification. A Phosphothreonine; by autocatalysis modification is found at threonine 844. In terms of domain architecture, KEN spans 983-1115; it reads KSKKLEFLLK…DQILREFLYS (133 aa).

Belongs to the protein kinase superfamily. Ser/Thr protein kinase family. As to quaternary structure, homodimer; in response to the accumulation of unfolded proteins. Dimerization of lumenal domains help position the cytoplasmic kinase domains optimally for autophosphorylation to initiate the unfolded protein response. Dimerization of the kinase domain is important for ribonuclease activity. Interacts (when phosphorylated) with PTC2; the interaction is direct and serves to attenuate the endoplasmic reticulum unfolded protein response. It depends on Mg(2+) as a cofactor. In terms of processing, autophosphorylated mainly on serine residues; phosphorylation enables nucleotide binding by the active site.

The protein localises to the endoplasmic reticulum membrane. The enzyme catalyses L-seryl-[protein] + ATP = O-phospho-L-seryl-[protein] + ADP + H(+). It carries out the reaction L-threonyl-[protein] + ATP = O-phospho-L-threonyl-[protein] + ADP + H(+). The kinase domain is activated by trans-autophosphorylation. Kinase activity is required for activation of the endoribonuclease domain. Inactivated by dephosphorylation via recruitment of PTC2. Senses unfolded proteins in the lumen of the endoplasmic reticulum via its N-terminal domain which leads to enzyme auto-activation. The active endoribonuclease domain splices HAC1 precursor mRNA to produce the mature form which then induces transcription of UPR target genes. The sequence is that of Serine/threonine-protein kinase/endoribonuclease IRE1 (IRE1) from Saccharomyces cerevisiae (strain ATCC 204508 / S288c) (Baker's yeast).